A 798-amino-acid polypeptide reads, in one-letter code: Suppressor of spindle checkpoint defect 1 (798 aa).

A coiled-coil region spans residues 339–359 (ESIQQSQVNVDDMCNRIANME).

It belongs to the APC5 family. The APC/C complex is probably composed of at least 12 subunits: apc-2, apc-10, apc-11, cdc-26, emb-1, emb-27, emb-30, mat-1, mat-2, mat-3, such-1 and gfi-3. As to expression, expressed in head neurons, vulval precursor cells and in mature sperm stored in the spermatheca.

It participates in protein modification; protein ubiquitination. Functionally, probable component of the anaphase promoting complex/cyclosome (APC/C), a cell cycle-regulated E3 ubiquitin ligase that controls progression through mitosis and the G1 phase of the cell cycle. The APC/C complex acts by mediating ubiquitination and subsequent degradation of target proteins. Required for the metaphase to anaphase transition in meiosis. Plays a role in the segregation of DNA and centrioles during meiosis in male germ cells. The protein is Suppressor of spindle checkpoint defect 1 of Caenorhabditis elegans.